Consider the following 425-residue polypeptide: Glutamyl-tRNA reductase (425 aa).

Substrate is bound by residues 49–52, serine 106, 111–113, and glutamine 117; these read TCNR and EPQ. Catalysis depends on cysteine 50, which acts as the Nucleophile. 186 to 191 contacts NADP(+); it reads GAGETI.

It belongs to the glutamyl-tRNA reductase family. As to quaternary structure, homodimer.

It carries out the reaction (S)-4-amino-5-oxopentanoate + tRNA(Glu) + NADP(+) = L-glutamyl-tRNA(Glu) + NADPH + H(+). It functions in the pathway porphyrin-containing compound metabolism; protoporphyrin-IX biosynthesis; 5-aminolevulinate from L-glutamyl-tRNA(Glu): step 1/2. In terms of biological role, catalyzes the NADPH-dependent reduction of glutamyl-tRNA(Glu) to glutamate 1-semialdehyde (GSA). The protein is Glutamyl-tRNA reductase of Saccharophagus degradans (strain 2-40 / ATCC 43961 / DSM 17024).